The sequence spans 123 residues: MPTIQQLVRKGRKDKKAKVKTAALKGSPQRRGVCTRVYTTTPKKPNSALRKVARVRLTSGIEVSAYIPGEGHNLQEHSMVLVRGGRVKDLPGVRYRIIRGSLDTQGVKDRKQARSRYGAKKEK.

Residues methionine 1 to glycine 32 form a disordered region. A compositionally biased stretch (basic residues) spans arginine 9 to valine 19. 3-methylthioaspartic acid is present on aspartate 89.

This sequence belongs to the universal ribosomal protein uS12 family. In terms of assembly, part of the 30S ribosomal subunit. Contacts proteins S8 and S17. May interact with IF1 in the 30S initiation complex.

Its function is as follows. With S4 and S5 plays an important role in translational accuracy. Functionally, interacts with and stabilizes bases of the 16S rRNA that are involved in tRNA selection in the A site and with the mRNA backbone. Located at the interface of the 30S and 50S subunits, it traverses the body of the 30S subunit contacting proteins on the other side and probably holding the rRNA structure together. The combined cluster of proteins S8, S12 and S17 appears to hold together the shoulder and platform of the 30S subunit. This is Small ribosomal subunit protein uS12 from Corynebacterium kroppenstedtii (strain DSM 44385 / JCM 11950 / CIP 105744 / CCUG 35717).